The primary structure comprises 315 residues: Lipoyl synthase (315 aa).

The [4Fe-4S] cluster site is built by cysteine 63, cysteine 68, cysteine 74, cysteine 89, cysteine 93, cysteine 96, and serine 303. The region spanning 75–292 (FSHGTATFMI…EKKAYDMGFR (218 aa)) is the Radical SAM core domain.

Belongs to the radical SAM superfamily. Lipoyl synthase family. [4Fe-4S] cluster is required as a cofactor.

Its subcellular location is the cytoplasm. The catalysed reaction is [[Fe-S] cluster scaffold protein carrying a second [4Fe-4S](2+) cluster] + N(6)-octanoyl-L-lysyl-[protein] + 2 oxidized [2Fe-2S]-[ferredoxin] + 2 S-adenosyl-L-methionine + 4 H(+) = [[Fe-S] cluster scaffold protein] + N(6)-[(R)-dihydrolipoyl]-L-lysyl-[protein] + 4 Fe(3+) + 2 hydrogen sulfide + 2 5'-deoxyadenosine + 2 L-methionine + 2 reduced [2Fe-2S]-[ferredoxin]. Its pathway is protein modification; protein lipoylation via endogenous pathway; protein N(6)-(lipoyl)lysine from octanoyl-[acyl-carrier-protein]: step 2/2. Catalyzes the radical-mediated insertion of two sulfur atoms into the C-6 and C-8 positions of the octanoyl moiety bound to the lipoyl domains of lipoate-dependent enzymes, thereby converting the octanoylated domains into lipoylated derivatives. This Laribacter hongkongensis (strain HLHK9) protein is Lipoyl synthase.